We begin with the raw amino-acid sequence, 314 residues long: 2,3-dihydroxyphenylpropionate/2,3-dihydroxicinnamic acid 1,2-dioxygenase (314 aa).

The active-site Proton donor is histidine 115. Histidine 179 functions as the Proton acceptor in the catalytic mechanism.

The protein belongs to the LigB/MhpB extradiol dioxygenase family. Homotetramer. The cofactor is Fe(2+).

The enzyme catalyses 3-(2,3-dihydroxyphenyl)propanoate + O2 = (2Z,4E)-2-hydroxy-6-oxonona-2,4-dienedioate + H(+). The catalysed reaction is (2E)-3-(2,3-dihydroxyphenyl)prop-2-enoate + O2 = (2Z,4E,7E)-2-hydroxy-6-oxonona-2,4,7-trienedioate + H(+). It participates in aromatic compound metabolism; 3-phenylpropanoate degradation. Its function is as follows. Catalyzes the non-heme iron(II)-dependent oxidative cleavage of 2,3-dihydroxyphenylpropionic acid and 2,3-dihydroxicinnamic acid into 2-hydroxy-6-ketononadienedioate and 2-hydroxy-6-ketononatrienedioate, respectively. This is 2,3-dihydroxyphenylpropionate/2,3-dihydroxicinnamic acid 1,2-dioxygenase from Rhodococcus globerulus.